The chain runs to 79 residues: Beta-defensin 15 (79 aa).

Positions 1–20 are cleaved as a signal peptide; that stretch reads MKTFLFLFAVLFFLDPAKNA. Cystine bridges form between cysteine 26–cysteine 53, cysteine 33–cysteine 47, and cysteine 37–cysteine 54.

Belongs to the beta-defensin family. As to expression, expressed in testis and to a lesser extent in epididymis (caput, corpus and cauda). Also weakly expressed in kidneys and colon.

The protein resides in the secreted. Has antibacterial activity. In Mus musculus (Mouse), this protein is Beta-defensin 15 (Defb15).